Here is a 111-residue protein sequence, read N- to C-terminus: UPF0321 protein P20C8.02c (111 aa).

The N-terminal stretch at 1–17 (MLLLFCICCVFIKLVLA) is a signal peptide. N20 carries N-linked (GlcNAc...) asparagine glycosylation.

The protein belongs to the UPF0321 family.

This is UPF0321 protein P20C8.02c from Schizosaccharomyces pombe (strain 972 / ATCC 24843) (Fission yeast).